The sequence spans 408 residues: Arginine deiminase (408 aa).

Catalysis depends on C397, which acts as the Amidino-cysteine intermediate.

The protein belongs to the arginine deiminase family.

It localises to the cytoplasm. It catalyses the reaction L-arginine + H2O = L-citrulline + NH4(+). It functions in the pathway amino-acid degradation; L-arginine degradation via ADI pathway; carbamoyl phosphate from L-arginine: step 1/2. The sequence is that of Arginine deiminase from Listeria innocua serovar 6a (strain ATCC BAA-680 / CLIP 11262).